The following is a 218-amino-acid chain: Phosphatidylserine decarboxylase proenzyme (218 aa).

The Schiff-base intermediate with substrate; via pyruvic acid role is filled by Ser187. A Pyruvic acid (Ser); by autocatalysis modification is found at Ser187.

Belongs to the phosphatidylserine decarboxylase family. PSD-A subfamily. In terms of assembly, heterodimer of a large membrane-associated beta subunit and a small pyruvoyl-containing alpha subunit. The cofactor is pyruvate. In terms of processing, is synthesized initially as an inactive proenzyme. Formation of the active enzyme involves a self-maturation process in which the active site pyruvoyl group is generated from an internal serine residue via an autocatalytic post-translational modification. Two non-identical subunits are generated from the proenzyme in this reaction, and the pyruvate is formed at the N-terminus of the alpha chain, which is derived from the carboxyl end of the proenzyme. The post-translation cleavage follows an unusual pathway, termed non-hydrolytic serinolysis, in which the side chain hydroxyl group of the serine supplies its oxygen atom to form the C-terminus of the beta chain, while the remainder of the serine residue undergoes an oxidative deamination to produce ammonia and the pyruvoyl prosthetic group on the alpha chain.

The protein resides in the cell membrane. It carries out the reaction a 1,2-diacyl-sn-glycero-3-phospho-L-serine + H(+) = a 1,2-diacyl-sn-glycero-3-phosphoethanolamine + CO2. The protein operates within phospholipid metabolism; phosphatidylethanolamine biosynthesis; phosphatidylethanolamine from CDP-diacylglycerol: step 2/2. In terms of biological role, catalyzes the formation of phosphatidylethanolamine (PtdEtn) from phosphatidylserine (PtdSer). The chain is Phosphatidylserine decarboxylase proenzyme from Geobacter metallireducens (strain ATCC 53774 / DSM 7210 / GS-15).